The chain runs to 5218 residues: HC-toxin synthetase (5218 aa).

Positions 223 to 620 (SARAHEQDAN…VGRSDTQIKL (398 aa)) are adenylation 1. The Carrier 1 domain maps to 769-843 (MNDDSLLLTA…TAASCIKSAQ (75 aa)). Ser803 is modified (O-(pantetheine 4'-phosphoryl)serine). Residues 858 to 1154 (IPVSPIQKLF…GWFTTISPVY (297 aa)) form a condensation 1 region. The interval 1338 to 1806 (EGVYPGSPMQ…LPIVSEHDTA (469 aa)) is epimerization. The tract at residues 1828–2233 (SRKVVEHPQR…IGRKDTQVKM (406 aa)) is adenylation 2. Residues 2379–2453 (ETTDTVEDRL…DMAKLFSHGQ (75 aa)) form the Carrier 2 domain. Ser2414 is modified (O-(pantetheine 4'-phosphoryl)serine). The tract at residues 2531–2929 (EDVFPCTPMQ…MEQFGHNLQT (399 aa)) is condensation 2. The adenylation 3 stretch occupies residues 2979–3386 (LEETAQSQPA…GRKDGQIKLR (408 aa)). One can recognise a Carrier 3 domain in the interval 3532–3608 (QVLTTNESVL…DMAGQISFVQ (77 aa)). At Ser3569 the chain carries O-(pantetheine 4'-phosphoryl)serine. A condensation 3 region spans residues 3649-4102 (EDVYPCTPLQ…PALSEAHLAE (454 aa)). Residues 4134–4530 (RRAQQSPNSQ…NLYYVRRKDS (397 aa)) are adenylation 4. A Carrier 4 domain is found at 4666-4740 (THTQKLLRQL…AMSSLIDEHN (75 aa)). Position 4701 is an O-(pantetheine 4'-phosphoryl)serine (Ser4701). The interval 4785–5101 (TLPCTEYQQM…SAIREFIPQA (317 aa)) is condensation 4.

This sequence belongs to the NRP synthetase family. Pantetheine 4'-phosphate is required as a cofactor.

The protein operates within mycotoxin biosynthesis; HC-toxin biosynthesis. Non-ribosomal peptide synthetase, part of the diffuse TOX2 gene cluster that mediates the biosynthesis of the HC-toxin, cyclic tetrapeptide of structure cyclo(D-Pro-L-Ala-D-Ala-L-Aeo), where Aeo stands for 2-amino-9,10-epoxi-8-oxodecanoic acid. HC-toxin is a determinant of specificity and virulence in the interaction between the producing fungus and its host, maize. HTS1, contains four modules, one for each amino acid in HC-toxin, with the order of activation being most likely Pro, Ala, Ala, and Aeo. In addition, HTS1 has one epimerase domain between modules 1 and 2, which is responsible for epimerizing L-Pro to D-Pro. The absence of an epimerizing domain after module 3, for producing D-Ala, can be explained by the presence in the cluster of TOXG, an Ala racemase, which produces D-Ala for incorporation by HTS1 into HC-toxin. The polypeptide is HC-toxin synthetase (Cochliobolus carbonum (Maize leaf spot fungus)).